Here is a 252-residue protein sequence, read N- to C-terminus: tRNA-cytidine(32) 2-sulfurtransferase (252 aa).

Residues 37 to 42 carry the PP-loop motif motif; sequence SGGKDS. 3 residues coordinate [4Fe-4S] cluster: C112, C115, and C202.

It belongs to the TtcA family. Homodimer. Requires Mg(2+) as cofactor. [4Fe-4S] cluster serves as cofactor.

The protein localises to the cytoplasm. The enzyme catalyses cytidine(32) in tRNA + S-sulfanyl-L-cysteinyl-[cysteine desulfurase] + AH2 + ATP = 2-thiocytidine(32) in tRNA + L-cysteinyl-[cysteine desulfurase] + A + AMP + diphosphate + H(+). It functions in the pathway tRNA modification. Its function is as follows. Catalyzes the ATP-dependent 2-thiolation of cytidine in position 32 of tRNA, to form 2-thiocytidine (s(2)C32). The sulfur atoms are provided by the cysteine/cysteine desulfurase (IscS) system. In Geotalea daltonii (strain DSM 22248 / JCM 15807 / FRC-32) (Geobacter daltonii), this protein is tRNA-cytidine(32) 2-sulfurtransferase.